Consider the following 227-residue polypeptide: Cytochrome c oxidase subunit 2 (227 aa).

The Mitochondrial intermembrane portion of the chain corresponds to 1-14 (MAYPFQLGLQDATS). A helical membrane pass occupies residues 15–45 (PIMEELTNFHDHTLMIVFLISSLVLYIISLM). The Mitochondrial matrix portion of the chain corresponds to 46 to 59 (LTTKLTHTSTMDAQ). Residues 60-87 (EVETIWTILPAAILVLIALPSLRILYMM) traverse the membrane as a helical segment. At 88 to 227 (DEINNPVLTV…YFESWSASMI (140 aa)) the chain is on the mitochondrial intermembrane side. Residues His-161, Cys-196, Glu-198, Cys-200, His-204, and Met-207 each contribute to the Cu cation site. Residue Glu-198 coordinates Mg(2+). Tyr-218 is subject to Phosphotyrosine.

The protein belongs to the cytochrome c oxidase subunit 2 family. As to quaternary structure, component of the cytochrome c oxidase (complex IV, CIV), a multisubunit enzyme composed of 14 subunits. The complex is composed of a catalytic core of 3 subunits MT-CO1, MT-CO2 and MT-CO3, encoded in the mitochondrial DNA, and 11 supernumerary subunits COX4I, COX5A, COX5B, COX6A, COX6B, COX6C, COX7A, COX7B, COX7C, COX8 and NDUFA4, which are encoded in the nuclear genome. The complex exists as a monomer or a dimer and forms supercomplexes (SCs) in the inner mitochondrial membrane with NADH-ubiquinone oxidoreductase (complex I, CI) and ubiquinol-cytochrome c oxidoreductase (cytochrome b-c1 complex, complex III, CIII), resulting in different assemblies (supercomplex SCI(1)III(2)IV(1) and megacomplex MCI(2)III(2)IV(2)). Found in a complex with TMEM177, COA6, COX18, COX20, SCO1 and SCO2. Interacts with TMEM177 in a COX20-dependent manner. Interacts with COX20. Interacts with COX16. Requires Cu cation as cofactor.

It is found in the mitochondrion inner membrane. The enzyme catalyses 4 Fe(II)-[cytochrome c] + O2 + 8 H(+)(in) = 4 Fe(III)-[cytochrome c] + 2 H2O + 4 H(+)(out). Its function is as follows. Component of the cytochrome c oxidase, the last enzyme in the mitochondrial electron transport chain which drives oxidative phosphorylation. The respiratory chain contains 3 multisubunit complexes succinate dehydrogenase (complex II, CII), ubiquinol-cytochrome c oxidoreductase (cytochrome b-c1 complex, complex III, CIII) and cytochrome c oxidase (complex IV, CIV), that cooperate to transfer electrons derived from NADH and succinate to molecular oxygen, creating an electrochemical gradient over the inner membrane that drives transmembrane transport and the ATP synthase. Cytochrome c oxidase is the component of the respiratory chain that catalyzes the reduction of oxygen to water. Electrons originating from reduced cytochrome c in the intermembrane space (IMS) are transferred via the dinuclear copper A center (CU(A)) of subunit 2 and heme A of subunit 1 to the active site in subunit 1, a binuclear center (BNC) formed by heme A3 and copper B (CU(B)). The BNC reduces molecular oxygen to 2 water molecules using 4 electrons from cytochrome c in the IMS and 4 protons from the mitochondrial matrix. This Conilurus penicillatus (Brush-tailed rabbit-rat) protein is Cytochrome c oxidase subunit 2 (MT-CO2).